Reading from the N-terminus, the 410-residue chain is WD repeat and FYVE domain-containing protein 1 (410 aa).

WD repeat units lie at residues 22 to 61, 66 to 105, 112 to 150, 153 to 192, 197 to 236, and 240 to 279; these read GHQD…QYWP, TMAS…NKMN, AHQN…NMLG, FFSS…CSVI, GHEG…GRTL, and GHHD…EEAP. The FYVE-type zinc-finger motif lies at 281–352; sequence WLESDSCQKC…VCDSCYDSIK (72 aa). The Zn(2+) site is built by C287, C290, C314, C317, C322, C325, C344, and C347. The stretch at 364-403 is one WD 7 repeat; the sequence is EGKHNISHMSMDVARGLMVTCGTDRVVKIWDMTPVVGCSL. S408 carries the post-translational modification Phosphoserine.

As to quaternary structure, binds PtdIns3P in vitro with high specificity over other phosphoinositides. Interacts (via WD repeat 2) with tyrosine-phosphorylated TLR3 (via TIR domain) in response to poly(I:C). Interacts with TLR4 in response to LPS. Interacts with TICAM1 in response to poly(I:C).

It localises to the early endosome. Positively regulates TLR3- and TLR4-mediated signaling pathways by bridging the interaction between TLR3 or TLR4 and TICAM1. Promotes TLR3/4 ligand-induced activation of transcription factors IRF3 and NF-kappa-B, as well as the production of IFN-beta and inflammatory cytokines. The chain is WD repeat and FYVE domain-containing protein 1 (WDFY1) from Bos taurus (Bovine).